Reading from the N-terminus, the 459-residue chain is Vanillin aminotransferase (459 aa).

Residues 115–116 (GS) and D255 contribute to the pyridoxal 5'-phosphate site. N6-(pyridoxal phosphate)lysine is present on K284. Pyridoxal 5'-phosphate is bound at residue 320 to 321 (FT). Residues 430–457 (LEELDELIRIYGKALKDTEKRVEELKSQ) are a coiled coil.

The protein belongs to the class-III pyridoxal-phosphate-dependent aminotransferase family. In terms of tissue distribution, confined to the placenta of green fruits at high levels. Barely detectable in the pericarp and seeds as well as in the placenta of mature fruits.

It catalyses the reaction vanillin + L-alanine = vanillylamine + pyruvate. The protein operates within aromatic compound metabolism; phenylpropanoid biosynthesis. Functionally, involved in the biosynthesis of capsaicinoids natural products, pungent alkaloids synthesized from phenylpropanoid intermediates in the placental tissue of chili pepper fruit acting as repellant on herbivorous mammals and conferring spiciness to hot peppers. Can transfer an amine from vanillylamine to pyruvate forming vanillin and L-alanine. This is Vanillin aminotransferase from Capsicum annuum (Capsicum pepper).